A 55-amino-acid chain; its full sequence is Large ribosomal subunit protein bL32 (55 aa).

Residues 1–23 show a composition bias toward basic residues; the sequence is MAVPKKKTSKAKRDQRRAHWKRK. Residues 1 to 26 form a disordered region; the sequence is MAVPKKKTSKAKRDQRRAHWKRKATI.

It belongs to the bacterial ribosomal protein bL32 family.

In Picosynechococcus sp. (strain ATCC 27264 / PCC 7002 / PR-6) (Agmenellum quadruplicatum), this protein is Large ribosomal subunit protein bL32.